Here is a 562-residue protein sequence, read N- to C-terminus: Glutamate--tRNA ligase (562 aa).

A 'HIGH' region motif is present at residues 104 to 114; that stretch reads PNPDFYMTLGN.

Belongs to the class-I aminoacyl-tRNA synthetase family. Glutamate--tRNA ligase type 2 subfamily.

The protein localises to the cytoplasm. The catalysed reaction is tRNA(Glu) + L-glutamate + ATP = L-glutamyl-tRNA(Glu) + AMP + diphosphate. Functionally, catalyzes the attachment of glutamate to tRNA(Glu) in a two-step reaction: glutamate is first activated by ATP to form Glu-AMP and then transferred to the acceptor end of tRNA(Glu). This chain is Glutamate--tRNA ligase, found in Ignicoccus hospitalis (strain KIN4/I / DSM 18386 / JCM 14125).